A 463-amino-acid polypeptide reads, in one-letter code: Rop guanine nucleotide exchange factor 4 (463 aa).

Disordered regions lie at residues 1–25 and 55–87; these read MESS…YRRT and GHEE…SDID. A compositionally biased stretch (acidic residues) spans 59-68; it reads DVSEDAEEPK. Residues 69-78 show a composition bias toward basic and acidic residues; it reads DDVVNDVHGD. In terms of domain architecture, PRONE spans 84-463; sequence SDIDSAEDAE…VDRTVRNRDD (380 aa).

In terms of assembly, interacts with ARAC10/ROP11. Expressed in root vascular tissue and trichoblast cell files. Expressed in root metaxylem cell files. Expressed in guard cells of cotyledons, rosette leaves, sepals, petal, stigmas and siliques. Expressed in root metaxylem cell files.

It is found in the cytoplasm. The protein localises to the cell membrane. Functionally, guanine-nucleotide exchange factor (GEF) that acts as an activator of Rop (Rho of plants) GTPases by promoting the exchange of GDP for GTP. In association with ROPGEF1, acts as a specific regulator of ARAC10/ROP11 function in ABA-mediated stomatal closure. This Arabidopsis thaliana (Mouse-ear cress) protein is Rop guanine nucleotide exchange factor 4 (ROPGEF4).